Reading from the N-terminus, the 244-residue chain is T-cell immunoreceptor with Ig and ITIM domains (244 aa).

A signal peptide spans 1–21 (MRWCLLLIWAQGLRQAPLASG). The 103-residue stretch at 22–124 (MMTGTIETTG…DGTYTGRIFL (103 aa)) folds into the Ig-like V-type domain. Residues 22–141 (MMTGTIETTG…AEHGARFQIP (120 aa)) are Extracellular-facing. Residues Asn-32 and Asn-101 are each glycosylated (N-linked (GlcNAc...) asparagine). A homodimerization region spans residues 32–42 (NISAEKGGSII). Residues Cys-45 and Cys-108 are joined by a disulfide bond. A helical membrane pass occupies residues 142–162 (LLGAMAATLVVICTAVIVVVA). Residues 163–244 (LTRKKKALRI…GNCSFFTETG (82 aa)) lie on the Cytoplasmic side of the membrane. Tyr-225 carries the post-translational modification Phosphotyrosine. The ITIM motif signature appears at 229-234 (LSYRSL).

In terms of assembly, homodimer in cis; binds with high affinity to PVR, forming a heterotetrameric assembly of two TIGIT and two PVR molecules. Binds with lower affinity to NECTIN2 and NECTIN3. Interacts with GRB2. Interacts with NECTIN4. In terms of tissue distribution, expressed at low levels on peripheral memory and regulatory CD4+ T-cells and NK cells and is up-regulated following activation of these cells (at protein level).

Its subcellular location is the cell membrane. In terms of biological role, inhibitory receptor that plays a role in the modulation of immune responses. Suppresses T-cell activation by promoting the generation of mature immunoregulatory dendritic cells. Upon binding to its ligands PVR/CD155 or NECTIN2/CD112, which are expressed on antigen-presenting cells, sends inhibitory signals to the T-cell or NK cell. Mechanistically, interaction with ligand leads to phosphorylation of the cytoplasmic tail by Src family tyrosine kinases such as FYN or LCK, allowing subsequent binding to adapter GRB2 and SHIP1/INPP5D. In turn, inhibits PI3K and MAPK signaling cascades. In addition, associates with beta-arrestin-2/ARRB2 to recruit SHIP1/INPP5D that suppresses autoubiquitination of TRAF6 and subsequently inhibits NF-kappa-B signaling pathway. Also acts as a receptor for NECTIN4 to inhibit NK cell cytotoxicity. The protein is T-cell immunoreceptor with Ig and ITIM domains (TIGIT) of Homo sapiens (Human).